The following is a 373-amino-acid chain: Nuclear migration protein JNM1 (373 aa).

The interval 33 to 53 (EVKEDGQQEEQEEASSRKDGL) is disordered. Serine 91 carries the phosphoserine modification. Coiled coils occupy residues 114–139 (KIEN…LATE), 200–245 (EDRK…EFEN), and 331–367 (WLKA…EDEA).

As to quaternary structure, component of the dynactin complex composed of at least ARP1, JNM1, NIP100 and ARP10. Dynactin comprises a short rod of ARP1 polymers attached to ARP10 at its pointed-end and probably associated with the capping protein at its barbed-end. The rod structure is implicated in dynein cargo binding. A sidearm formed by NIP100 projects from the ARP1 filament and is implicated in motor binding. Interacts with ARP1.

The protein resides in the cytoplasm. It localises to the cytoskeleton. In terms of biological role, component of the dynactin complex which assists cytoplasmic dynein by increasing its processivity and by regulation of its cargo binding. The dynactin complex is required for the spindle translocation late in anaphase and is involved in a cell wall synthesis checkpoint. JNM1 is associated with the rod and links it to the projecting sidearm. Required for proper nuclear migration during the mitotic cell cycle and for astral microtubule development. This chain is Nuclear migration protein JNM1 (JNM1), found in Saccharomyces cerevisiae (strain ATCC 204508 / S288c) (Baker's yeast).